A 101-amino-acid polypeptide reads, in one-letter code: Small ribosomal subunit protein uS14 (101 aa).

The protein belongs to the universal ribosomal protein uS14 family. As to quaternary structure, part of the 30S ribosomal subunit. Contacts proteins S3 and S10.

Functionally, binds 16S rRNA, required for the assembly of 30S particles and may also be responsible for determining the conformation of the 16S rRNA at the A site. The polypeptide is Small ribosomal subunit protein uS14 (Acinetobacter baumannii (strain AB307-0294)).